We begin with the raw amino-acid sequence, 600 residues long: Chaperone protein DnaK (600 aa).

Phosphothreonine; by autocatalysis is present on threonine 175. The tract at residues 572-600 (FAQQTQQQDPNNQKDDVTEATVTDDSTKK) is disordered. A compositionally biased stretch (polar residues) spans 591–600 (ATVTDDSTKK).

This sequence belongs to the heat shock protein 70 family.

Functionally, acts as a chaperone. The chain is Chaperone protein DnaK from Ureaplasma urealyticum serovar 10 (strain ATCC 33699 / Western).